A 339-amino-acid chain; its full sequence is Transmembrane protein 120B (339 aa).

A coiled-coil region spans residues 1-77; the sequence is MSGQLERCER…ASREEAELVQ (77 aa). 6 consecutive transmembrane segments (helical) span residues 102–124, 132–152, 159–179, 187–207, 270–290, and 302–322; these read GLYLNLVLGNVNVTLLSNQAKFA, FKLYLTIILLLGAVACRFVLH, VFNFLLVWYYCTLTIRESILI, GWWVSHHYVSTFLSGVMLTWP, FLLPFLFCGHFWQLYNAVTLF, and QVFVLAFTFLILFLGNFLTTL.

It belongs to the TMEM120 family. Heterooligomer with TMEM120A.

The protein localises to the nucleus inner membrane. Its function is as follows. Necessary for efficient adipogenesis. Does not show ion channel activity. This chain is Transmembrane protein 120B, found in Homo sapiens (Human).